Here is a 164-residue protein sequence, read N- to C-terminus: Dynein regulatory complex protein 8 (164 aa).

EF-hand domains are found at residues 16-51 (ELHK…LGCC) and 94-129 (AAED…EGEP).

Belongs to the DRC8 family. In terms of assembly, component of the nexin-dynein regulatory complex (N-DRC).

The protein localises to the cytoplasm. Its subcellular location is the cytoskeleton. It localises to the flagellum axoneme. Its function is as follows. Component of the nexin-dynein regulatory complex (N-DRC), a key regulator of ciliary/flagellar motility which maintains the alignment and integrity of the distal axoneme and regulates microtubule sliding in motile axonemes. This is Dynein regulatory complex protein 8 (Efcab2) from Mus musculus (Mouse).